The sequence spans 620 residues: 1-deoxy-D-xylulose-5-phosphate synthase (620 aa).

Thiamine diphosphate is bound by residues His-80 and 121–123 (GHS). Asp-152 is a Mg(2+) binding site. Thiamine diphosphate contacts are provided by residues 153-154 (GA), Asn-181, Tyr-288, and Glu-370. Mg(2+) is bound at residue Asn-181.

It belongs to the transketolase family. DXPS subfamily. As to quaternary structure, homodimer. Requires Mg(2+) as cofactor. Thiamine diphosphate serves as cofactor.

It carries out the reaction D-glyceraldehyde 3-phosphate + pyruvate + H(+) = 1-deoxy-D-xylulose 5-phosphate + CO2. It participates in metabolic intermediate biosynthesis; 1-deoxy-D-xylulose 5-phosphate biosynthesis; 1-deoxy-D-xylulose 5-phosphate from D-glyceraldehyde 3-phosphate and pyruvate: step 1/1. In terms of biological role, catalyzes the acyloin condensation reaction between C atoms 2 and 3 of pyruvate and glyceraldehyde 3-phosphate to yield 1-deoxy-D-xylulose-5-phosphate (DXP). This is 1-deoxy-D-xylulose-5-phosphate synthase from Pseudoalteromonas translucida (strain TAC 125).